The sequence spans 21 residues: Putative NADH dehydrogenase subunit PS9 (21 aa).

The polypeptide is Putative NADH dehydrogenase subunit PS9 (Pinus strobus (Eastern white pine)).